Here is a 1108-residue protein sequence, read N- to C-terminus: Multidrug resistance regulator 1 (1108 aa).

Over residues 1–19 (MSIATTPIETPKSPKSTEP) the composition is skewed to polar residues. The interval 1 to 27 (MSIATTPIETPKSPKSTEPQVRKRKKV) is disordered. Positions 31 to 59 (CTNCRKRKIRCDRQHPCNNCIKSKKHNAC) form a DNA-binding region, zn(2)-C6 fungal-type. Over residues 68-83 (PANFSTNGSSHGNTVP) the composition is skewed to polar residues. 3 disordered regions span residues 68 to 138 (PANF…SENE), 968 to 990 (DQTY…LDSR), and 1021 to 1064 (AQQQ…YYGN). 2 stretches are compositionally biased toward basic and acidic residues: residues 86 to 104 (RPYE…EAPR) and 114 to 123 (NERKNSKKSP). Residues 124 to 138 (DNTVANNQQTASENE) are compositionally biased toward polar residues. Residues 134–165 (ASENEVTITLSELNMLKQRLQNIEANINAQSN) adopt a coiled-coil conformation. 2 stretches are compositionally biased toward low complexity: residues 970 to 980 (TYSTSSESSST) and 1023 to 1041 (QQRQ…QSQS).

The protein resides in the nucleus. Functionally, transcription factor that acts as the central regulator of the MDR1 efflux pump. Other target genes include those encoding oxidoreductases, whose up-regulation in fluconazole-resistant isolates may help to prevent cell damage resulting from the generation of toxic molecules in the presence of fluconazole and thereby contribute to drug resistance. The protein is Multidrug resistance regulator 1 of Candida albicans (strain SC5314 / ATCC MYA-2876) (Yeast).